Consider the following 478-residue polypeptide: Sulfate adenylyltransferase subunit 1 (478 aa).

The 217-residue stretch at 24–240 (KSLLRFLTCG…VLENVDIDAD (217 aa)) folds into the tr-type G domain. The interval 33-40 (GSVDDGKS) is G1. 33 to 40 (GSVDDGKS) provides a ligand contact to GTP. Residues 91-95 (GITID) are G2. The interval 112–115 (DTPG) is G3. Residues 112–116 (DTPGH) and 167–170 (NKMD) each bind GTP. The G4 stretch occupies residues 167–170 (NKMD). The segment at 206-208 (SAL) is G5.

Belongs to the TRAFAC class translation factor GTPase superfamily. Classic translation factor GTPase family. CysN/NodQ subfamily. In terms of assembly, heterodimer composed of CysD, the smaller subunit, and CysN.

It catalyses the reaction sulfate + ATP + H(+) = adenosine 5'-phosphosulfate + diphosphate. It participates in sulfur metabolism; hydrogen sulfide biosynthesis; sulfite from sulfate: step 1/3. With CysD forms the ATP sulfurylase (ATPS) that catalyzes the adenylation of sulfate producing adenosine 5'-phosphosulfate (APS) and diphosphate, the first enzymatic step in sulfur assimilation pathway. APS synthesis involves the formation of a high-energy phosphoric-sulfuric acid anhydride bond driven by GTP hydrolysis by CysN coupled to ATP hydrolysis by CysD. The chain is Sulfate adenylyltransferase subunit 1 from Aliivibrio fischeri (strain MJ11) (Vibrio fischeri).